Here is a 161-residue protein sequence, read N- to C-terminus: Ecotin (161 aa).

Residues 1 to 23 form the signal peptide; it reads MGNFTVRATAGLMLASLSTLAHA. C69 and C106 are joined by a disulfide.

It belongs to the protease inhibitor I11 (ecotin) family. In terms of assembly, homodimer.

It localises to the periplasm. General inhibitor of family S1 serine proteases. The chain is Ecotin from Pseudomonas fluorescens (strain Pf0-1).